The following is a 318-amino-acid chain: Cytochrome f (318 aa).

Positions 1 to 34 are cleaved as a signal peptide; the sequence is MQNRNFFEYPKNWIILLIPIFTTFNLLFTSDCYA. Heme contacts are provided by Phe35, Cys55, Cys58, and His59. A helical membrane pass occupies residues 284–303; the sequence is LQGLLVFLFLVVLAQVFLVL.

The protein belongs to the cytochrome f family. In terms of assembly, the 4 large subunits of the cytochrome b6-f complex are cytochrome b6, subunit IV (17 kDa polypeptide, petD), cytochrome f and the Rieske protein, while the 4 small subunits are PetG, PetL, PetM and PetN. The complex functions as a dimer. Requires heme as cofactor.

Its subcellular location is the plastid. The protein resides in the chloroplast thylakoid membrane. Functionally, component of the cytochrome b6-f complex, which mediates electron transfer between photosystem II (PSII) and photosystem I (PSI), cyclic electron flow around PSI, and state transitions. This chain is Cytochrome f, found in Chaetosphaeridium globosum (Charophycean green alga).